A 269-amino-acid chain; its full sequence is Zinc transporter ZupT (269 aa).

The next 8 helical transmembrane spans lie at 11 to 31 (IALA…LLVL), 40 to 60 (LLAF…LSEI), 80 to 100 (YGTL…HFIP), 125 to 145 (ALLT…ATFF), 158 to 178 (AFAI…PVYF), 187 to 207 (FSAS…GYWL), 217 to 237 (FGWV…DELL), and 249 to 269 (TVYG…LFKW). Residues Asn136 and Glu139 each coordinate Fe(2+). 2 residues coordinate Zn(2+): Glu139 and His164. Fe(2+) contacts are provided by Asn165, Glu168, and Glu197. Glu168 lines the Zn(2+) pocket.

It belongs to the ZIP transporter (TC 2.A.5) family. ZupT subfamily.

It is found in the cell inner membrane. The catalysed reaction is Zn(2+)(in) = Zn(2+)(out). Its function is as follows. Mediates zinc uptake. May also transport other divalent cations. The chain is Zinc transporter ZupT from Stenotrophomonas maltophilia (strain R551-3).